A 316-amino-acid polypeptide reads, in one-letter code: tRNA dimethylallyltransferase (316 aa).

Residue 17 to 24 (GPTASGKT) coordinates ATP. 19 to 24 (TASGKT) lines the substrate pocket. Interaction with substrate tRNA regions lie at residues 42–45 (DSAL), 166–170 (QRLSR), and 247–252 (RCVGYR).

Belongs to the IPP transferase family. In terms of assembly, monomer. The cofactor is Mg(2+).

It catalyses the reaction adenosine(37) in tRNA + dimethylallyl diphosphate = N(6)-dimethylallyladenosine(37) in tRNA + diphosphate. Functionally, catalyzes the transfer of a dimethylallyl group onto the adenine at position 37 in tRNAs that read codons beginning with uridine, leading to the formation of N6-(dimethylallyl)adenosine (i(6)A). This is tRNA dimethylallyltransferase from Citrobacter koseri (strain ATCC BAA-895 / CDC 4225-83 / SGSC4696).